The sequence spans 470 residues: ATP synthase subunit beta (470 aa).

An ATP-binding site is contributed by 157 to 164; sequence GGAGVGKT.

It belongs to the ATPase alpha/beta chains family. In terms of assembly, F-type ATPases have 2 components, CF(1) - the catalytic core - and CF(0) - the membrane proton channel. CF(1) has five subunits: alpha(3), beta(3), gamma(1), delta(1), epsilon(1). CF(0) has three main subunits: a(1), b(2) and c(9-12). The alpha and beta chains form an alternating ring which encloses part of the gamma chain. CF(1) is attached to CF(0) by a central stalk formed by the gamma and epsilon chains, while a peripheral stalk is formed by the delta and b chains.

It localises to the cell inner membrane. It carries out the reaction ATP + H2O + 4 H(+)(in) = ADP + phosphate + 5 H(+)(out). Functionally, produces ATP from ADP in the presence of a proton gradient across the membrane. The catalytic sites are hosted primarily by the beta subunits. The chain is ATP synthase subunit beta from Geobacter sp. (strain M21).